Here is a 258-residue protein sequence, read N- to C-terminus: NAD kinase (258 aa).

Asp51 acts as the Proton acceptor in catalysis. Residues 51–52 (DG), Lys56, 119–120 (ND), Lys130, Asp149, 160–165 (TAYSLS), and Ala184 each bind NAD(+).

It belongs to the NAD kinase family. It depends on a divalent metal cation as a cofactor.

It is found in the cytoplasm. It carries out the reaction NAD(+) + ATP = ADP + NADP(+) + H(+). Its function is as follows. Involved in the regulation of the intracellular balance of NAD and NADP, and is a key enzyme in the biosynthesis of NADP. Catalyzes specifically the phosphorylation on 2'-hydroxyl of the adenosine moiety of NAD to yield NADP. This Thermotoga sp. (strain RQ2) protein is NAD kinase.